A 68-amino-acid polypeptide reads, in one-letter code: Small integral membrane protein 45 (68 aa).

Residues 7-27 (WFVPVYLVISVLILVGFGACI) traverse the membrane as a helical segment.

In terms of tissue distribution, highly expressed in brain.

Its subcellular location is the nucleus. The protein resides in the cytoplasm. It localises to the membrane. Its function is as follows. Plays a role in the regulation of neuron maturation. In Homo sapiens (Human), this protein is Small integral membrane protein 45.